Consider the following 2146-residue polypeptide: Conidial pigment polyketide synthase alb1 (2146 aa).

An N-terminal acylcarrier protein transacylase domain (SAT) region spans residues 8 to 244 (YLFGDQTISC…KAPGVSGPYH (237 aa)). The 432-residue stretch at 375–806 (RSKIAIIGMS…GGNTALLMED (432 aa)) folds into the Ketosynthase family 3 (KS3) domain. Residues Cys547, His682, and His724 each act as for beta-ketoacyl synthase activity in the active site. The tract at residues 911–1232 (GFVFTGQGAQ…LSTLHLAGVE (322 aa)) is malonyl-CoA:ACP transacylase (MAT) domain. Ser1001 functions as the For acyl/malonyl transferase activity in the catalytic mechanism. Positions 1290–1602 (TTAAQKIVEC…ARKILDTVLP (313 aa)) are product template (PT) domain. The N-terminal hotdog fold stretch occupies residues 1294–1427 (QKIVECREDG…VKLFNCAERE (134 aa)). One can recognise a PKS/mFAS DH domain in the interval 1294 to 1598 (QKIVECREDG…FQALARKILD (305 aa)). His1326 (proton acceptor; for dehydratase activity) is an active-site residue. Residues 1453 to 1598 (AHRMQRGMVY…FQALARKILD (146 aa)) form a C-terminal hotdog fold region. The active-site Proton donor; for dehydratase activity is Asp1511. Residues 1611 to 1644 (GAPAPAPARPIGEKKAPPPIKVTGPPKPNPSNAR) form a disordered region. Pro residues predominate over residues 1627 to 1639 (PPPIKVTGPPKPN). Positions 1647 to 1721 (SPVVARALEI…DFKAYLAEKG (75 aa)) constitute a Carrier 1 domain. An O-(pantetheine 4'-phosphoryl)serine modification is found at Ser1681. Residues 1724 to 1769 (DSSSPEPSSEPESKFSFNSDASSEASSGLTTPGITSPVKHEAPKGG) are disordered. The span at 1738 to 1750 (FSFNSDASSEASS) shows a compositional bias: low complexity. The Carrier 2 domain occupies 1768 to 1845 (GGQNKVWKSI…AVQAALDLKP (78 aa)). Residue Ser1805 is modified to O-(pantetheine 4'-phosphoryl)serine. The claisen cyclase domain stretch occupies residues 1892–2019 (KLFMFPDGSG…SIGLFGDGKR (128 aa)). Ser1962 (for Claisen cyclase activity) is an active-site residue.

The protein resides in the endosome. It catalyses the reaction 6 malonyl-CoA + acetyl-CoA + 6 H(+) = naphtopyrone YWA1 + 6 CO2 + 7 CoA + H2O. It participates in pigment biosynthesis; melanin biosynthesis. In terms of biological role, non-reducing polyketide synthase; part of the gene cluster that mediates the biosynthesis of dihydroxynaphthalene (DHN)-melanin, a bluish-green pigment and a structural component of the conidial wall. The first step of the pathway is the production of the heptaketide naphtopyrone YWA1 by the polyketide synthase alb1 though condensation of acetyl-CoA with malonyl-CoA. The naphtopyrone YWA1 is then converted to the pentaketide 1,3,6,8-tetrahydroxynaphthalene (1,3,6,8-THN) by the heptaketide hydrolyase ayg1 though chain-length shortening. 1,3,6,8-THN is substrate of the hydroxynaphthalene reductase arp2 to yield scytalone. The scytalone dehydratase arp1 then reduces scytalone to 1,3,8-THN. 1,3,8-THN is also substrate of the hydroxynaphthalene reductase arp2 to yield vermelone. Vermelone is further converted by the multicopper oxidase abr1 to 1,8-DHN. Finally the laccase abr2 transforms 1,8-DHN to DHN-melanin. DHN-melanin biosynthesis appears to be initiated in endosomes where early enzymes (abl1, ayg1, arp1 and arp2) localize, with exocytosis leading to melanin deposition on the cell surface where late enzymes (abr1 and abr2) localize. DHN-melanin is an important structural component of the outer cell wall and is required for the presence of conidial surface hydrophobins. DHN-melanin also plays a crucial role in fungal virulence, including a protective role against the host's immune defenses. DHN-melanin protects also conidia against amoeba predation. The protein is Conidial pigment polyketide synthase alb1 of Aspergillus fumigatus (strain ATCC MYA-4609 / CBS 101355 / FGSC A1100 / Af293) (Neosartorya fumigata).